We begin with the raw amino-acid sequence, 431 residues long: Histidinol dehydrogenase (431 aa).

Residues Tyr-127, Gln-189, and Asn-212 each coordinate NAD(+). Residues Ser-237, Gln-259, and His-262 each contribute to the substrate site. Residues Gln-259 and His-262 each contribute to the Zn(2+) site. Catalysis depends on proton acceptor residues Glu-326 and His-327. Substrate-binding residues include His-327, Asp-360, Glu-414, and His-419. Residue Asp-360 participates in Zn(2+) binding. His-419 serves as a coordination point for Zn(2+).

The protein belongs to the histidinol dehydrogenase family. Requires Zn(2+) as cofactor.

It catalyses the reaction L-histidinol + 2 NAD(+) + H2O = L-histidine + 2 NADH + 3 H(+). Its pathway is amino-acid biosynthesis; L-histidine biosynthesis; L-histidine from 5-phospho-alpha-D-ribose 1-diphosphate: step 9/9. Functionally, catalyzes the sequential NAD-dependent oxidations of L-histidinol to L-histidinaldehyde and then to L-histidine. The chain is Histidinol dehydrogenase from Xylella fastidiosa (strain Temecula1 / ATCC 700964).